The sequence spans 294 residues: Formate dehydrogenase, nitrate-inducible, iron-sulfur subunit (294 aa).

Residues 1–256 (MAMETQDIIK…DTSVSLWKGA (256 aa)) lie on the Periplasmic side of the membrane. 4Fe-4S ferredoxin-type domains lie at 30 to 58 (VAKL…IRDE), 91 to 123 (LEWL…QYAN), 124 to 153 (GIVD…LNKE), and 158 to 189 (YKCT…FGTK). [4Fe-4S] cluster contacts are provided by Cys39, Cys42, Cys45, Cys49, Cys100, Cys103, Cys108, Cys112, Cys133, Cys136, Cys139, Cys143, Cys160, Cys163, Cys175, and Cys179. A helical transmembrane segment spans residues 257 to 279 (LKPLAAAGFIATFAGLIFHYIGI). At 280–294 (GPNKEVDDDEEDHHE) the chain is on the cytoplasmic side.

As to quaternary structure, trimer of heterotrimers, consisting of subunits alpha, beta and gamma. [4Fe-4S] cluster serves as cofactor.

Its subcellular location is the cell inner membrane. Functionally, formate dehydrogenase allows E.coli to use formate as major electron donor during anaerobic respiration, when nitrate is used as electron acceptor. The beta subunit FdnH is an electron transfer unit containing 4 iron-sulfur clusters; it serves as a conduit for electrons that are transferred from the formate oxidation site in the alpha subunit (FdnG) to the menaquinone associated with the gamma subunit (FdnI) of formate dehydrogenase-N. Formate dehydrogenase-N is part of a system that generates proton motive force, together with the dissimilatory nitrate reductase (Nar). The sequence is that of Formate dehydrogenase, nitrate-inducible, iron-sulfur subunit (fdnH) from Escherichia coli (strain K12).